The primary structure comprises 74 residues: Translation initiation factor IF-1 (74 aa).

The region spanning 1–72 is the S1-like domain; the sequence is MSKEDAIEME…NKGRITYRLK (72 aa).

The protein belongs to the IF-1 family. As to quaternary structure, component of the 30S ribosomal translation pre-initiation complex which assembles on the 30S ribosome in the order IF-2 and IF-3, IF-1 and N-formylmethionyl-tRNA(fMet); mRNA recruitment can occur at any time during PIC assembly.

The protein resides in the cytoplasm. Its function is as follows. One of the essential components for the initiation of protein synthesis. Stabilizes the binding of IF-2 and IF-3 on the 30S subunit to which N-formylmethionyl-tRNA(fMet) subsequently binds. Helps modulate mRNA selection, yielding the 30S pre-initiation complex (PIC). Upon addition of the 50S ribosomal subunit IF-1, IF-2 and IF-3 are released leaving the mature 70S translation initiation complex. The polypeptide is Translation initiation factor IF-1 (Synechococcus sp. (strain JA-2-3B'a(2-13)) (Cyanobacteria bacterium Yellowstone B-Prime)).